Here is a 183-residue protein sequence, read N- to C-terminus: Ferredoxin-2, mitochondrial (183 aa).

The transit peptide at 1-52 (MAASVAWGGVNAGFLLRAARGAWWSRPGGFWGSGEAAAPAIARKFRATGSRP) directs the protein to the mitochondrion. The 103-residue stretch at 68-170 (VNVVFVDRSG…GAEFTLPKIT (103 aa)) folds into the 2Fe-2S ferredoxin-type domain. Residues C105, C111, C114, and C151 each contribute to the [2Fe-2S] cluster site.

This sequence belongs to the adrenodoxin/putidaredoxin family. As to quaternary structure, component of the mitochondrial core iron-sulfur cluster (ISC) complex composed of NFS1, LYRM4, NDUFAB1, ISCU, FXN, and FDX2; this complex is a heterohexamer containing two copies of each monomer. Form a heterodimer complex with NFS1. Interacts (in both their reduced and oxidized states) with the cysteine desulfurase (NFS1:LYRM4) complex; this interaction stimulates cysteine desulfurase activity, and serves as a reductant for Fe-S cluster assembly. The cofactor is [2Fe-2S] cluster.

Its subcellular location is the mitochondrion. It localises to the mitochondrion matrix. Functionally, electron donor, of the core iron-sulfur cluster (ISC) assembly complex, that acts to reduce the persulfide into sulfide during [2Fe-2S] clusters assembly on the scaffolding protein ISCU. The core iron-sulfur cluster (ISC) assembly complex is involved in the de novo synthesis of a [2Fe-2S] cluster, the first step of the mitochondrial iron-sulfur protein biogenesis. This process is initiated by the cysteine desulfurase complex (NFS1:LYRM4:NDUFAB1) that produces persulfide which is delivered on the scaffold protein ISCU in a FXN-dependent manner. Then this complex is stabilized by FDX2 which provides reducing equivalents to accomplish the [2Fe-2S] cluster assembly. Finally, the [2Fe-2S] cluster is transferred from ISCU to chaperone proteins, including HSCB, HSPA9 and GLRX5. Essential for coenzyme Q biosynthesis: together with FDXR, transfers the electrons required for the hydroxylation reaction performed by COQ6. This is Ferredoxin-2, mitochondrial from Bos taurus (Bovine).